The chain runs to 316 residues: Acetyl-coenzyme A carboxylase carboxyl transferase subunit beta (316 aa).

The 270-residue stretch at 39 to 308 (LWHKCSKCGV…TPPMVLWETM (270 aa)) folds into the CoA carboxyltransferase N-terminal domain. Residues cysteine 43, cysteine 46, cysteine 62, and cysteine 65 each coordinate Zn(2+). The C4-type zinc-finger motif lies at 43–65 (CSKCGVLTYTKDLRANQMVCVEC).

This sequence belongs to the AccD/PCCB family. In terms of assembly, acetyl-CoA carboxylase is a heterohexamer composed of biotin carboxyl carrier protein (AccB), biotin carboxylase (AccC) and two subunits each of ACCase subunit alpha (AccA) and ACCase subunit beta (AccD). The cofactor is Zn(2+).

It is found in the cytoplasm. It catalyses the reaction N(6)-carboxybiotinyl-L-lysyl-[protein] + acetyl-CoA = N(6)-biotinyl-L-lysyl-[protein] + malonyl-CoA. It participates in lipid metabolism; malonyl-CoA biosynthesis; malonyl-CoA from acetyl-CoA: step 1/1. In terms of biological role, component of the acetyl coenzyme A carboxylase (ACC) complex. Biotin carboxylase (BC) catalyzes the carboxylation of biotin on its carrier protein (BCCP) and then the CO(2) group is transferred by the transcarboxylase to acetyl-CoA to form malonyl-CoA. The protein is Acetyl-coenzyme A carboxylase carboxyl transferase subunit beta of Nostoc sp. (strain PCC 7120 / SAG 25.82 / UTEX 2576).